The following is a 493-amino-acid chain: Hexokinase (493 aa).

A Hexokinase domain is found at 27 to 481 (EELSWRINKF…SGKGAAITAA (455 aa)). The tract at residues 91–239 (TGQEKGTYYA…AIPAKVCCVL (149 aa)) is hexokinase small subdomain. 102–107 (DFGGTN) serves as a coordination point for ATP. Residues 177–203 (SVGFTFSFPCTSPSINCSILIDWTKGF) are glucose-binding. Residues 240–470 (NDAVGTLMSC…ENLIIIPADD (231 aa)) are hexokinase large subdomain.

It belongs to the hexokinase family.

The catalysed reaction is a D-hexose + ATP = a D-hexose 6-phosphate + ADP + H(+). It carries out the reaction D-mannose + ATP = D-mannose 6-phosphate + ADP + H(+). The enzyme catalyses D-fructose + ATP = D-fructose 6-phosphate + ADP + H(+). It catalyses the reaction D-glucose + ATP = D-glucose 6-phosphate + ADP + H(+). It functions in the pathway carbohydrate metabolism; hexose metabolism. The protein operates within carbohydrate degradation; glycolysis; D-glyceraldehyde 3-phosphate and glycerone phosphate from D-glucose: step 1/4. Its function is as follows. Catalyzes the phosphorylation of various hexoses to hexose 6-phosphate. In Plasmodium falciparum, this protein is Hexokinase (HK).